A 234-amino-acid chain; its full sequence is MLTRKQHELLTFIQTRLEDSGISPSFEEMKEALDLKSKSGVHRLISALEERGFIRRLPNRARALEVLRQPDSAVGKAAPVSQREAANTNSALPPLRAAPKAAPAPANDVIELPLHGKIAAGVPIEALETTATLPVPAALLGAGEHYALEVSGDSMVEAGIFDGDYALVRKTDVARDGEIVVALVRGEEATLKYLHREKGMVRLDPANAAYDPQYYRPEEVAVQGKLAGLLRRYH.

Residues 26-46 (FEEMKEALDLKSKSGVHRLIS) constitute a DNA-binding region (H-T-H motif). The segment at 73 to 100 (AVGKAAPVSQREAANTNSALPPLRAAPK) is disordered. Low complexity predominate over residues 91–100 (ALPPLRAAPK). Catalysis depends on for autocatalytic cleavage activity residues Ser154 and Lys192.

Belongs to the peptidase S24 family. Homodimer.

It carries out the reaction Hydrolysis of Ala-|-Gly bond in repressor LexA.. In terms of biological role, represses a number of genes involved in the response to DNA damage (SOS response), including recA and lexA. In the presence of single-stranded DNA, RecA interacts with LexA causing an autocatalytic cleavage which disrupts the DNA-binding part of LexA, leading to derepression of the SOS regulon and eventually DNA repair. The polypeptide is LexA repressor (Novosphingobium aromaticivorans (strain ATCC 700278 / DSM 12444 / CCUG 56034 / CIP 105152 / NBRC 16084 / F199)).